Consider the following 192-residue polypeptide: uncharacterized protein (192 aa).

The region spanning 29–160 (QRQAAVLVPI…PLDIHRRGND (132 aa)) is the Nudix hydrolase domain. Positions 67-89 (GAVDNTDATLIAAALREAQEEVA) match the Nudix box motif. Mg(2+) contacts are provided by Glu-83 and Glu-87.

The protein belongs to the Nudix hydrolase family. PCD1 subfamily. The cofactor is Mn(2+). Mg(2+) is required as a cofactor.

Probably mediates the hydrolysis of some nucleoside diphosphate derivatives. This is an uncharacterized protein from Klebsiella pneumoniae (strain 342).